The chain runs to 327 residues: Delta(6)-protoilludene synthase HYPSUDRAFT_138665 (327 aa).

Residues D79, N215, S219, and E223 each coordinate Mg(2+). Positions 79-83 match the DDXXD motif motif; that stretch reads DEHTD. (2E,6E)-farnesyl diphosphate-binding residues include R304 and Y305.

The protein belongs to the terpene synthase family. The cofactor is Mg(2+).

It carries out the reaction (2E,6E)-farnesyl diphosphate = Delta(6)-protoilludene + diphosphate. Its function is as follows. Terpene cyclase that catalyzes the cyclization of farnesyl diphosphate (FPP) to delta(6)-protoilludene. In Hypholoma sublateritium (strain FD-334 SS-4), this protein is Delta(6)-protoilludene synthase HYPSUDRAFT_138665.